A 77-amino-acid chain; its full sequence is ATP synthase subunit 9, mitochondrial (77 aa).

2 helical membrane-spanning segments follow: residues 8–28 (MGAG…GNVL) and 45–72 (LFGY…LISF).

This sequence belongs to the ATPase C chain family. As to quaternary structure, F-type ATPases have 2 components, CF(1) - the catalytic core - and CF(0) - the membrane proton channel. CF(1) has five subunits: alpha(3), beta(3), gamma(1), delta(1), epsilon(1). CF(0) has three main subunits: a, b and c.

It is found in the mitochondrion membrane. Its function is as follows. This protein is one of the chains of the nonenzymatic membrane component (F0) of mitochondrial ATPase. The protein is ATP synthase subunit 9, mitochondrial (ATP9) of Petunia sp. (Petunia).